Here is a 179-residue protein sequence, read N- to C-terminus: Ribosome maturation factor RimM (179 aa).

Residues 100 to 176 form the PRC barrel domain; the sequence is KEEFHLLELI…FVIINPPNGL (77 aa).

The protein belongs to the RimM family. Binds ribosomal protein uS19.

The protein resides in the cytoplasm. In terms of biological role, an accessory protein needed during the final step in the assembly of 30S ribosomal subunit, possibly for assembly of the head region. Essential for efficient processing of 16S rRNA. May be needed both before and after RbfA during the maturation of 16S rRNA. It has affinity for free ribosomal 30S subunits but not for 70S ribosomes. The sequence is that of Ribosome maturation factor RimM from Prochlorococcus marinus (strain MIT 9301).